A 283-amino-acid chain; its full sequence is Lipoyl synthase (283 aa).

The [4Fe-4S] cluster site is built by cysteine 35, cysteine 40, cysteine 46, cysteine 61, cysteine 65, cysteine 68, and serine 273. A Radical SAM core domain is found at 47–262 (FRERQATFLI…RAAALATGFA (216 aa)).

Belongs to the radical SAM superfamily. Lipoyl synthase family. It depends on [4Fe-4S] cluster as a cofactor.

The protein localises to the cytoplasm. The catalysed reaction is [[Fe-S] cluster scaffold protein carrying a second [4Fe-4S](2+) cluster] + N(6)-octanoyl-L-lysyl-[protein] + 2 oxidized [2Fe-2S]-[ferredoxin] + 2 S-adenosyl-L-methionine + 4 H(+) = [[Fe-S] cluster scaffold protein] + N(6)-[(R)-dihydrolipoyl]-L-lysyl-[protein] + 4 Fe(3+) + 2 hydrogen sulfide + 2 5'-deoxyadenosine + 2 L-methionine + 2 reduced [2Fe-2S]-[ferredoxin]. It participates in protein modification; protein lipoylation via endogenous pathway; protein N(6)-(lipoyl)lysine from octanoyl-[acyl-carrier-protein]: step 2/2. Functionally, catalyzes the radical-mediated insertion of two sulfur atoms into the C-6 and C-8 positions of the octanoyl moiety bound to the lipoyl domains of lipoate-dependent enzymes, thereby converting the octanoylated domains into lipoylated derivatives. This chain is Lipoyl synthase, found in Geobacter metallireducens (strain ATCC 53774 / DSM 7210 / GS-15).